The primary structure comprises 248 residues: Ubiquinone/menaquinone biosynthesis C-methyltransferase UbiE (248 aa).

Positions 68 and 92 each coordinate S-adenosyl-L-methionine.

This sequence belongs to the class I-like SAM-binding methyltransferase superfamily. MenG/UbiE family.

It catalyses the reaction a 2-demethylmenaquinol + S-adenosyl-L-methionine = a menaquinol + S-adenosyl-L-homocysteine + H(+). It carries out the reaction a 2-methoxy-6-(all-trans-polyprenyl)benzene-1,4-diol + S-adenosyl-L-methionine = a 5-methoxy-2-methyl-3-(all-trans-polyprenyl)benzene-1,4-diol + S-adenosyl-L-homocysteine + H(+). It functions in the pathway quinol/quinone metabolism; menaquinone biosynthesis; menaquinol from 1,4-dihydroxy-2-naphthoate: step 2/2. It participates in cofactor biosynthesis; ubiquinone biosynthesis. Its function is as follows. Methyltransferase required for the conversion of demethylmenaquinol (DMKH2) to menaquinol (MKH2) and the conversion of 2-polyprenyl-6-methoxy-1,4-benzoquinol (DDMQH2) to 2-polyprenyl-3-methyl-6-methoxy-1,4-benzoquinol (DMQH2). The sequence is that of Ubiquinone/menaquinone biosynthesis C-methyltransferase UbiE from Rickettsia conorii (strain ATCC VR-613 / Malish 7).